Here is a 374-residue protein sequence, read N- to C-terminus: Chaperone protein DnaJ (374 aa).

Residues 4 to 69 (DFYETLCVSR…QKRAAYDRFG (66 aa)) form the J domain. The CR-type zinc finger occupies 131–210 (GKTAQIRVPT…CSGQGRLTEE (80 aa)). Zn(2+) is bound by residues C144, C147, C161, C164, C184, C187, C198, and C201. 4 CXXCXGXG motif repeats span residues 144–151 (CDECAGSG), 161–168 (CPMCHGAG), 184–191 (CPQCQGRG), and 198–205 (CRKCSGQG).

Belongs to the DnaJ family. In terms of assembly, homodimer. The cofactor is Zn(2+).

The protein localises to the cytoplasm. Functionally, participates actively in the response to hyperosmotic and heat shock by preventing the aggregation of stress-denatured proteins and by disaggregating proteins, also in an autonomous, DnaK-independent fashion. Unfolded proteins bind initially to DnaJ; upon interaction with the DnaJ-bound protein, DnaK hydrolyzes its bound ATP, resulting in the formation of a stable complex. GrpE releases ADP from DnaK; ATP binding to DnaK triggers the release of the substrate protein, thus completing the reaction cycle. Several rounds of ATP-dependent interactions between DnaJ, DnaK and GrpE are required for fully efficient folding. Also involved, together with DnaK and GrpE, in the DNA replication of plasmids through activation of initiation proteins. This chain is Chaperone protein DnaJ, found in Chelativorans sp. (strain BNC1).